We begin with the raw amino-acid sequence, 350 residues long: Protein pelota homolog (350 aa).

It belongs to the eukaryotic release factor 1 family. Pelota subfamily. As to quaternary structure, monomer. The cofactor is a divalent metal cation.

It localises to the cytoplasm. May function in recognizing stalled ribosomes, interact with stem-loop structures in stalled mRNA molecules, and effect endonucleolytic cleavage of the mRNA. May play a role in the release non-functional ribosomes and degradation of damaged mRNAs. Has endoribonuclease activity. The chain is Protein pelota homolog from Methanosarcina acetivorans (strain ATCC 35395 / DSM 2834 / JCM 12185 / C2A).